Here is a 398-residue protein sequence, read N- to C-terminus: ATP-dependent RNA helicase eIF4A (398 aa).

A Q motif motif is present at residues 25–53 (DSFDSMELKPELLRGIYAYGFERPSAIQQ). The 171-residue stretch at 56 to 226 (ILPIIKGNDV…TKFMRDPVRI (171 aa)) folds into the Helicase ATP-binding domain. 69–76 (AQSGTGKT) is a binding site for ATP. Residues 174–177 (DEAD) carry the DEAD box motif. The region spanning 237 to 398 (GIKQFYIAVE…EMPMNVADLI (162 aa)) is the Helicase C-terminal domain.

This sequence belongs to the DEAD box helicase family. eIF4A subfamily. Component of the eIF4F complex, which composition varies with external and internal environmental conditions. It is composed of at least eIF4A, eIF4E and eIF4G.

It localises to the cytoplasm. It catalyses the reaction ATP + H2O = ADP + phosphate + H(+). In terms of biological role, ATP-dependent RNA helicase which is a subunit of the eIF4F complex involved in cap recognition and is required for mRNA binding to ribosome. In the current model of translation initiation, eIF4A unwinds RNA secondary structures in the 5'-UTR of mRNAs which is necessary to allow efficient binding of the small ribosomal subunit, and subsequent scanning for the initiator codon. This chain is ATP-dependent RNA helicase eIF4A (tif1), found in Neosartorya fischeri (strain ATCC 1020 / DSM 3700 / CBS 544.65 / FGSC A1164 / JCM 1740 / NRRL 181 / WB 181) (Aspergillus fischerianus).